A 138-amino-acid polypeptide reads, in one-letter code: Large ribosomal subunit protein bL19 (138 aa).

It belongs to the bacterial ribosomal protein bL19 family.

Its function is as follows. This protein is located at the 30S-50S ribosomal subunit interface and may play a role in the structure and function of the aminoacyl-tRNA binding site. The sequence is that of Large ribosomal subunit protein bL19 from Rickettsia conorii (strain ATCC VR-613 / Malish 7).